Consider the following 378-residue polypeptide: Ribosomal RNA large subunit methyltransferase G (378 aa).

It belongs to the methyltransferase superfamily. RlmG family.

It localises to the cytoplasm. The enzyme catalyses guanosine(1835) in 23S rRNA + S-adenosyl-L-methionine = N(2)-methylguanosine(1835) in 23S rRNA + S-adenosyl-L-homocysteine + H(+). Its function is as follows. Specifically methylates the guanine in position 1835 (m2G1835) of 23S rRNA. The sequence is that of Ribosomal RNA large subunit methyltransferase G from Shigella dysenteriae serotype 1 (strain Sd197).